The chain runs to 535 residues: CTP synthase (535 aa).

An amidoligase domain region spans residues M1–L268. Residue S14 participates in CTP binding. Position 14 (S14) interacts with UTP. S15–T20 is a binding site for ATP. L-glutamine is bound at residue Y55. D72 lines the ATP pocket. Residues D72 and E142 each contribute to the Mg(2+) site. Residues D149–E151, K189–Q194, and K225 each bind CTP. UTP is bound by residues K189–Q194 and K225. ATP is bound at residue V243. The Glutamine amidotransferase type-1 domain occupies Y302–L535. G359 provides a ligand contact to L-glutamine. C386 (nucleophile; for glutamine hydrolysis) is an active-site residue. Residues F387–Q390, E410, and R467 contribute to the L-glutamine site. Residues H511 and E513 contribute to the active site.

Belongs to the CTP synthase family. Homotetramer in the presence of ATP and UTP. The enzyme dissociates into homodimers in the absence of substrate nucleotides.

The catalysed reaction is UTP + L-glutamine + ATP + H2O = CTP + L-glutamate + ADP + phosphate + 2 H(+). It carries out the reaction L-glutamine + H2O = L-glutamate + NH4(+). The enzyme catalyses UTP + NH4(+) + ATP = CTP + ADP + phosphate + 2 H(+). The protein operates within pyrimidine metabolism; CTP biosynthesis via de novo pathway; CTP from UDP: step 2/2. Allosterically activated by GTP, when glutamine is the substrate; GTP has no effect on the reaction when ammonia is the substrate. The allosteric effector GTP functions by stabilizing the protein conformation that binds the tetrahedral intermediate(s) formed during glutamine hydrolysis. Inhibited by the product CTP, via allosteric rather than competitive inhibition. Catalyzes the ATP-dependent amination of UTP to CTP with either L-glutamine or ammonia as the source of nitrogen. Regulates intracellular CTP levels through interactions with the four ribonucleotide triphosphates. This chain is CTP synthase, found in Saccharolobus solfataricus (strain ATCC 35092 / DSM 1617 / JCM 11322 / P2) (Sulfolobus solfataricus).